Reading from the N-terminus, the 258-residue chain is Imidazole glycerol phosphate synthase subunit HisF (258 aa).

Catalysis depends on residues Asp-12 and Asp-131.

This sequence belongs to the HisA/HisF family. Heterodimer of HisH and HisF.

Its subcellular location is the cytoplasm. The enzyme catalyses 5-[(5-phospho-1-deoxy-D-ribulos-1-ylimino)methylamino]-1-(5-phospho-beta-D-ribosyl)imidazole-4-carboxamide + L-glutamine = D-erythro-1-(imidazol-4-yl)glycerol 3-phosphate + 5-amino-1-(5-phospho-beta-D-ribosyl)imidazole-4-carboxamide + L-glutamate + H(+). It functions in the pathway amino-acid biosynthesis; L-histidine biosynthesis; L-histidine from 5-phospho-alpha-D-ribose 1-diphosphate: step 5/9. In terms of biological role, IGPS catalyzes the conversion of PRFAR and glutamine to IGP, AICAR and glutamate. The HisF subunit catalyzes the cyclization activity that produces IGP and AICAR from PRFAR using the ammonia provided by the HisH subunit. This Arthrobacter sp. (strain FB24) protein is Imidazole glycerol phosphate synthase subunit HisF.